Here is a 478-residue protein sequence, read N- to C-terminus: Ninja-family protein 7 (478 aa).

Disordered regions lie at residues 1 to 247 (MDDD…LTPG), 336 to 374 (SFTAKDKADQTGTKQVDDGKKPREAGASSSAHAEDEKKA), and 454 to 478 (DAPAQDNSATLPAFPAGNQATSAEN). A compositionally biased stretch (basic and acidic residues) spans 23–35 (KARDAPLEPKAEP). The segment covering 169-179 (ISISTDDGSTG) has biased composition (polar residues). Over residues 180–189 (ENEDVAESEA) the composition is skewed to acidic residues. Residues 233–242 (SFSGSESSSG) show a composition bias toward low complexity. A compositionally biased stretch (basic and acidic residues) spans 339–359 (AKDKADQTGTKQVDDGKKPRE).

It belongs to the Ninja family.

Its subcellular location is the nucleus. The chain is Ninja-family protein 7 from Zea mays (Maize).